A 384-amino-acid chain; its full sequence is 8-amino-7-oxononanoate synthase (384 aa).

Arg21 provides a ligand contact to substrate. Pyridoxal 5'-phosphate is bound at residue 108–109 (GF). Position 133 (His133) interacts with substrate. Residues Ser179, His207, and Thr233 each coordinate pyridoxal 5'-phosphate. Lys236 bears the N6-(pyridoxal phosphate)lysine mark. Residue Thr350 coordinates substrate.

Belongs to the class-II pyridoxal-phosphate-dependent aminotransferase family. BioF subfamily. As to quaternary structure, homodimer. Requires pyridoxal 5'-phosphate as cofactor.

It carries out the reaction 6-carboxyhexanoyl-[ACP] + L-alanine + H(+) = (8S)-8-amino-7-oxononanoate + holo-[ACP] + CO2. It functions in the pathway cofactor biosynthesis; biotin biosynthesis. Catalyzes the decarboxylative condensation of pimeloyl-[acyl-carrier protein] and L-alanine to produce 8-amino-7-oxononanoate (AON), [acyl-carrier protein], and carbon dioxide. The protein is 8-amino-7-oxononanoate synthase of Erwinia tasmaniensis (strain DSM 17950 / CFBP 7177 / CIP 109463 / NCPPB 4357 / Et1/99).